A 240-amino-acid polypeptide reads, in one-letter code: MRIDVLTLFPEMFSIFNHSIIGRAIENEFLKINTVNIRDYTINKHKKVDDYPYGGGAGMVMAAQPIVDSIKTVKKENKGKVIFLGPKGKTFNQDLAKELAREEELIFLCGHYEGIDERAYEYIDMEISLGDFVLTGGEMACIPIVDSICRLLDGVLGSSESYEDESFYNGLLEYPQYTRPAIYEGKAVPKVLLSGHHENIKKWRKAKSLIITNKVRPDLFKKYKLTEEDKKILKDFNKKL.

Residues glycine 110 and 129–134 (LGDFVL) contribute to the S-adenosyl-L-methionine site.

It belongs to the RNA methyltransferase TrmD family. As to quaternary structure, homodimer.

It localises to the cytoplasm. The catalysed reaction is guanosine(37) in tRNA + S-adenosyl-L-methionine = N(1)-methylguanosine(37) in tRNA + S-adenosyl-L-homocysteine + H(+). Its function is as follows. Specifically methylates guanosine-37 in various tRNAs. The sequence is that of tRNA (guanine-N(1)-)-methyltransferase from Clostridium botulinum (strain Loch Maree / Type A3).